We begin with the raw amino-acid sequence, 215 residues long: High mobility group protein B1 (215 aa).

1 to 10 contacts heparin; sequence MGKGDPKKPR. A sufficient for interaction with HAVCR2 region spans residues 1–97; it reads MGKGDPKKPR…KFKDPNAPKR (97 aa). N6-acetyllysine is present on residues K3, K7, K8, and K12. The interval 3–15 is LPS binding (delipidated); that stretch reads KGDPKKPRGKMSS. A DNA-binding region (HMG box 1) is located at residues 9–79; that stretch reads PRGKMSSYAF…RYEREMKTYI (71 aa). Residue C23 is modified to Cysteine sulfonic acid (-SO3H); alternate. Cysteines 23 and 45 form a disulfide. The tract at residues 27–43 is NLS 1; it reads HKKKHPDASVNFSEFSK. Positions 27–43 match the Nuclear localization signal (NLS) 1 motif; that stretch reads HKKKHPDASVNFSEFSK. 3 positions are modified to N6-acetyllysine: K28, K29, and K30. An Isoglutamyl lysine isopeptide (Lys-Gln) (interchain with Q-?) cross-link involves residue K28. S35 carries the phosphoserine modification. The residue at position 43 (K43) is an N6-acetyllysine. Residues K43 and K44 each participate in an isoglutamyl lysine isopeptide (Lys-Gln) (interchain with Q-?) cross-link. A Cysteine sulfonic acid (-SO3H); alternate modification is found at C45. K68 is covalently cross-linked (Isoglutamyl lysine isopeptide (Lys-Gln) (interchain with Q-?)). The segment at 76 to 95 is disordered; that stretch reads KTYIPPKGETKKKFKDPNAP. Residues 80 to 96 are LPS binding (Lipid A); that stretch reads PPKGETKKKFKDPNAPK. Residues 83–94 show a composition bias toward basic and acidic residues; sequence GETKKKFKDPNA. Residues 89 to 108 form a cytokine-stimulating activity region; the sequence is FKDPNAPKRPPSAFFLFCSE. K90 is subject to N6-acetyllysine. Residues 95–163 constitute a DNA-binding region (HMG box 2); the sequence is PKRPPSAFFL…KYEKDIAAYR (69 aa). S100 is subject to Phosphoserine. C106 bears the Cysteine sulfonic acid (-SO3H) mark. K127, K128, K141, K172, K173, K177, and K180 each carry N6-acetyllysine. The binding to AGER/RAGE stretch occupies residues 150-183; it reads KLKEKYEKDIAAYRAKGKPDAAKKGVVKAEKSKK. Residues 161–179 show a composition bias toward basic and acidic residues; the sequence is AYRAKGKPDAAKKGVVKAE. The disordered stretch occupies residues 161–215; the sequence is AYRAKGKPDAAKKGVVKAEKSKKKKEEEDDEEDEEDEEEEEEEEDEDEEEDDDDE. The segment at 178-184 is NLS 2; that stretch reads AEKSKKK. The short motif at 178 to 184 is the Nuclear localization signal (NLS) 2 element; that stretch reads AEKSKKK. K180 participates in a covalent cross-link: Isoglutamyl lysine isopeptide (Lys-Gln) (interchain with Q-?). S181 carries the ADP-ribosylserine modification. N6-acetyllysine is present on residues K182, K183, K184, and K185. Residues K182, K183, and K184 each participate in an isoglutamyl lysine isopeptide (Lys-Gln) (interchain with Q-?) cross-link. The segment covering 187-215 has biased composition (acidic residues); that stretch reads EEDDEEDEEDEEEEEEEEDEDEEEDDDDE.

This sequence belongs to the HMGB family. In terms of assembly, interacts (fully reduced HMGB1) with CXCL12; probably in a 1:2 ratio involving two molecules of CXCL12, each interacting with one HMG box of HMGB1; inhibited by glycyrrhizin. Associates with the TLR4:LY96 receptor complex. Component of the RAG complex composed of core components RAG1 and RAG2, and associated component HMGB1 or HMGB2. Interacts (in cytoplasm upon starvation) with BECN1; inhibits the interaction of BECN1 and BCL2 leading to promotion of autophagy. Interacts with KPNA1; involved in nuclear import. Interacts with SREBF1, TLR2, TLR4, TLR9, APEX1, FEN1, POLB, TERT. Interacts with AGER, PTPRZ1, IL1B, MSH2, XPA, XPC, HNF1A, TP53. Interacts with CD24; the probable CD24:SIGLEC10 complex is proposed to inhibit HGMB1-mediated tissue damage immune response. Interacts with THBD; prevents HGMB1 interaction with ACER/RAGE and inhibits HGMB1 pro-inflammatory activity. Interacts with HAVCR2; impairs HMGB1 binding to B-DNA and likely HMGB1-mediated innate immune response. Interacts with XPO1; mediating nuclear export. Interacts with receptor RAGE/AGER. Acetylated on multiple sites upon stimulation with LPS. Acetylation on lysine residues in the nuclear localization signals (NLS 1 and NLS 2) leads to cytoplasmic localization and subsequent secretion. Acetylation on Lys-3 results in preferential binding to DNA ends and impairs DNA bending activity. Post-translationally, phosphorylated at serine residues. Phosphorylation in both NLS regions is required for cytoplasmic translocation followed by secretion. In terms of processing, reduction/oxidation of cysteine residues Cys-23, Cys-45 and Cys-106 and a possible intramolecular disulfide bond involving Cys-23 and Cys-45 give rise to different redox forms with specific functional activities in various cellular compartments: 1- Fully reduced HGMB1 (HMGB1C23hC45hC106h), 2- Disulfide HMGB1 (HMGB1C23-C45C106h) and 3- Sulfonyl HMGB1 (HMGB1C23soC45soC106so). Poly-ADP-ribosylated by PARP1 when secreted following stimulation with LPS. Post-translationally, in vitro cleavage by CASP1 is liberating a HMG box 1-containing peptide which may mediate immunogenic activity; the peptide antagonizes apoptosis-induced immune tolerance. Can be proteolytically cleaved by a thrombin:thrombomodulin complex; reduces binding to heparin and pro-inflammatory activities. In terms of processing, forms covalent cross-links mediated by transglutaminase TGM2, between a glutamine and the epsilon-amino group of a lysine residue, forming homopolymers and heteropolymers. As to expression, serum levels are found elevated in mice with modeled systemic lupus erythematosus (SLE) and are correlated with SLE disease activity.

Its subcellular location is the nucleus. The protein resides in the cytoplasm. It is found in the chromosome. The protein localises to the cell membrane. It localises to the endosome. Its subcellular location is the endoplasmic reticulum-Golgi intermediate compartment. The protein resides in the secreted. Functionally, multifunctional redox sensitive protein with various roles in different cellular compartments. In the nucleus is one of the major chromatin-associated non-histone proteins and acts as a DNA chaperone involved in replication, transcription, chromatin remodeling, V(D)J recombination, DNA repair and genome stability. Proposed to be an universal biosensor for nucleic acids. Promotes host inflammatory response to sterile and infectious signals and is involved in the coordination and integration of innate and adaptive immune responses. In the cytoplasm functions as a sensor and/or chaperone for immunogenic nucleic acids implicating the activation of TLR9-mediated immune responses, and mediates autophagy. Acts as a danger associated molecular pattern (DAMP) molecule that amplifies immune responses during tissue injury. Released to the extracellular environment can bind DNA, nucleosomes, IL-1 beta, CXCL12, AGER isoform 2/sRAGE, lipopolysaccharide (LPS) and lipoteichoic acid (LTA), and activates cells through engagement of multiple surface receptors. In the extracellular compartment fully reduced HMGB1 (released by necrosis) acts as a chemokine, disulfide HMGB1 (actively secreted) as a cytokine, and sulfonyl HMGB1 (released from apoptotic cells) promotes immunological tolerance. Has proangiogenic activity. May be involved in platelet activation. Binds to phosphatidylserine and phosphatidylethanolamide. Bound to RAGE mediates signaling for neuronal outgrowth. May play a role in accumulation of expanded polyglutamine (polyQ) proteins. Nuclear functions are attributed to fully reduced HGMB1. Associates with chromatin and binds DNA with a preference to non-canonical DNA structures such as single-stranded DNA, DNA-containing cruciforms or bent structures, supercoiled DNA and ZDNA. Can bent DNA and enhance DNA flexibility by looping thus providing a mechanism to promote activities on various gene promoters by enhancing transcription factor binding and/or bringing distant regulatory sequences into close proximity. May be involved in nucleotide excision repair (NER), mismatch repair (MMR) and base excision repair (BER) pathways, and double strand break repair such as non-homologous end joining (NHEJ). Involved in V(D)J recombination by acting as a cofactor of the RAG complex: acts by stimulating cleavage and RAG protein binding at the 23 bp spacer of conserved recombination signal sequences (RSS). In vitro can displace histone H1 from highly bent DNA. Can restructure the canonical nucleosome leading to relaxation of structural constraints for transcription factor-binding. Enhances binding of sterol regulatory element-binding proteins (SREBPs) such as SREBF1 to their cognate DNA sequences and increases their transcriptional activities. Facilitates binding of TP53 to DNA. Proposed to be involved in mitochondrial quality control and autophagy in a transcription-dependent fashion implicating HSPB1; however, this function has been questioned. Can modulate the activity of the telomerase complex and may be involved in telomere maintenance. In terms of biological role, in the cytoplasm proposed to dissociate the BECN1:BCL2 complex via competitive interaction with BECN1 leading to autophagy activation. Can protect BECN1 and ATG5 from calpain-mediated cleavage and thus proposed to control their proautophagic and proapoptotic functions and to regulate the extent and severity of inflammation-associated cellular injury. In myeloid cells has a protective role against endotoxemia and bacterial infection by promoting autophagy. Involved in endosomal translocation and activation of TLR9 in response to CpG-DNA in macrophages. Its function is as follows. In the extracellular compartment (following either active secretion or passive release) involved in regulation of the inflammatory response. Fully reduced HGMB1 (which subsequently gets oxidized after release) in association with CXCL12 mediates the recruitment of inflammatory cells during the initial phase of tissue injury; the CXCL12:HMGB1 complex triggers CXCR4 homodimerization. Induces the migration of monocyte-derived immature dendritic cells and seems to regulate adhesive and migratory functions of neutrophils implicating AGER/RAGE and ITGAM. Can bind to various types of DNA and RNA including microbial unmethylated CpG-DNA to enhance the innate immune response to nucleic acids. Proposed to act in promiscuous DNA/RNA sensing which cooperates with subsequent discriminative sensing by specific pattern recognition receptors. Promotes extracellular DNA-induced AIM2 inflammasome activation implicating AGER/RAGE. Disulfide HMGB1 binds to transmembrane receptors, such as AGER/RAGE, TLR2, TLR4 and probably TREM1, thus activating their signal transduction pathways. Mediates the release of cytokines/chemokines such as TNF, IL-1, IL-6, IL-8, CCL2, CCL3, CCL4 and CXCL10. Promotes secretion of interferon-gamma by macrophage-stimulated natural killer (NK) cells in concert with other cytokines like IL-2 or IL-12. TLR4 is proposed to be the primary receptor promoting macrophage activation and signaling through TLR4 seems to implicate LY96/MD-2. In bacterial LPS- or LTA-mediated inflammatory responses binds to the endotoxins and transfers them to CD14 for signaling to the respective TLR4:LY96 and TLR2 complexes. Contributes to tumor proliferation by association with ACER/RAGE. Can bind to IL1-beta and signals through the IL1R1:IL1RAP receptor complex. Binding to class A CpG activates cytokine production in plasmacytoid dendritic cells implicating TLR9, MYD88 and AGER/RAGE and can activate autoreactive B cells. Via HMGB1-containing chromatin immune complexes may also promote B cell responses to endogenous TLR9 ligands through a B-cell receptor (BCR)-dependent and ACER/RAGE-independent mechanism. Inhibits phagocytosis of apoptotic cells by macrophages; the function is dependent on poly-ADP-ribosylation and involves binding to phosphatidylserine on the cell surface of apoptotic cells. In adaptive immunity may be involved in enhancing immunity through activation of effector T-cells and suppression of regulatory T (TReg) cells. In contrast, without implicating effector or regulatory T-cells, required for tumor infiltration and activation of T-cells expressing the lymphotoxin LTA:LTB heterotrimer thus promoting tumor malignant progression. Also reported to limit proliferation of T-cells. Released HMGB1:nucleosome complexes formed during apoptosis can signal through TLR2 to induce cytokine production. Involved in induction of immunological tolerance by apoptotic cells; its pro-inflammatory activities when released by apoptotic cells are neutralized by reactive oxygen species (ROS)-dependent oxidation specifically on Cys-106. During macrophage activation by activated lymphocyte-derived self apoptotic DNA (ALD-DNA) promotes recruitment of ALD-DNA to endosomes. The protein is High mobility group protein B1 (Hmgb1) of Mus musculus (Mouse).